A 369-amino-acid polypeptide reads, in one-letter code: Muscleblind-like protein 1 (369 aa).

C3H1-type zinc fingers lie at residues W13–K41, N47–P73, T178–D206, and D214–A240.

It belongs to the muscleblind family.

It is found in the nucleus. The protein localises to the cytoplasm. Its subcellular location is the cytoplasmic granule. In terms of biological role, involved in pre-mRNA alternative splicing regulation. Binds to CUG triplet repeat in RNA. This is Muscleblind-like protein 1 (MBNL1) from Gallus gallus (Chicken).